Consider the following 191-residue polypeptide: Holliday junction branch migration complex subunit RuvA (191 aa).

The interval 1–64 is domain I; it reads MIGSITGNVE…DNITQLYGFL (64 aa). The interval 65 to 142 is domain II; the sequence is NRQEQDYFKM…KMPIEETFSI (78 aa). The flexible linker stretch occupies residues 143–146; the sequence is IEND. Residues 146-191 are domain III; the sequence is DDSLAALISLGYEKLKAFNVIQEIKSKTPDASTQEVIRKALQKLSQ.

The protein belongs to the RuvA family. In terms of assembly, homotetramer. Forms an RuvA(8)-RuvB(12)-Holliday junction (HJ) complex. HJ DNA is sandwiched between 2 RuvA tetramers; dsDNA enters through RuvA and exits via RuvB. An RuvB hexamer assembles on each DNA strand where it exits the tetramer. Each RuvB hexamer is contacted by two RuvA subunits (via domain III) on 2 adjacent RuvB subunits; this complex drives branch migration. In the full resolvosome a probable DNA-RuvA(4)-RuvB(12)-RuvC(2) complex forms which resolves the HJ.

The protein resides in the cytoplasm. Functionally, the RuvA-RuvB-RuvC complex processes Holliday junction (HJ) DNA during genetic recombination and DNA repair, while the RuvA-RuvB complex plays an important role in the rescue of blocked DNA replication forks via replication fork reversal (RFR). RuvA specifically binds to HJ cruciform DNA, conferring on it an open structure. The RuvB hexamer acts as an ATP-dependent pump, pulling dsDNA into and through the RuvAB complex. HJ branch migration allows RuvC to scan DNA until it finds its consensus sequence, where it cleaves and resolves the cruciform DNA. This is Holliday junction branch migration complex subunit RuvA from Ehrlichia ruminantium (strain Gardel).